The following is a 90-amino-acid chain: uncharacterized protein (90 aa).

This is an uncharacterized protein from Escherichia coli (strain K12).